Reading from the N-terminus, the 177-residue chain is Chorismate pyruvate-lyase (177 aa).

Methionine 37, arginine 79, leucine 117, and glutamate 159 together coordinate substrate.

The protein belongs to the UbiC family. In terms of assembly, monomer.

It is found in the cytoplasm. The enzyme catalyses chorismate = 4-hydroxybenzoate + pyruvate. It participates in cofactor biosynthesis; ubiquinone biosynthesis. In terms of biological role, removes the pyruvyl group from chorismate, with concomitant aromatization of the ring, to provide 4-hydroxybenzoate (4HB) for the ubiquinone pathway. The chain is Chorismate pyruvate-lyase from Sodalis glossinidius (strain morsitans).